The following is a 646-amino-acid chain: Wee1-like protein kinase (646 aa).

The disordered stretch occupies residues 1-181; that stretch reads MSFLSRQQPP…GTPPHKTFRK (181 aa). Residues 32–43 are compositionally biased toward acidic residues; it reads DCEEEEEEEEEE. At S53 the chain carries Phosphoserine; by PLK1. Phosphoserine is present on residues S78 and S85. Residues 94–103 show a composition bias toward low complexity; the sequence is LLPGACPGAD. Position 123 is a phosphoserine; by CDK1 (S123). A phosphoserine mark is found at S127, S137, S139, S150, and S165. Residues 158 to 170 show a composition bias toward basic and acidic residues; sequence RAGEGRRSPRPDH. T187, T190, and T239 each carry phosphothreonine. 3 positions are modified to phosphoserine: S270, S307, and S312. The 271-residue stretch at 299 to 569 folds into the Protein kinase domain; that stretch reads FHELEKIGSG…AMALVKHSVL (271 aa). ATP contacts are provided by residues 305-313 and K328; that span reads IGSGEFGSV. N342 contacts Mg(2+). D426 acts as the Proton acceptor in catalysis. The Mg(2+) site is built by N431, D463, and G465. S642 carries the phosphoserine; by BRSK1 and BRSK2 modification.

The protein belongs to the protein kinase superfamily. Ser/Thr protein kinase family. WEE1 subfamily. Requires Mg(2+) as cofactor. Phosphorylated during M and G1 phases. Also autophosphorylated. Phosphorylation at Ser-642 by BRSK1 and BRSK2 in post-mitotic neurons, leads to down-regulate WEE1 activity in polarized neurons. Phosphorylated at Ser-53 and Ser-123 by PLK1 and CDK1, respectively, generating an signal for degradation that can be recognized by the SCF(BTRC) complex, leading to its ubiquitination and degradation at the onset of G2/M phase. In terms of processing, dephosphorylated at Thr-239 by CTDP1. Dephosphorylated at Ser-53 and Ser-123 by the serine/threonine-protein phosphatase 2A preventing its ubiquitin-mediated degradation. Post-translationally, ubiquitinated and degraded at the onset of G2/M phase.

The protein localises to the nucleus. It catalyses the reaction L-tyrosyl-[protein] + ATP = O-phospho-L-tyrosyl-[protein] + ADP + H(+). Synthesis is increased during S and G2 phases, presumably by an increase in transcription; activity is decreased by phosphorylation during M phase. Protein levels fall in M phase as a result of decreased synthesis combined with degradation. Activity seems to be negatively regulated by phosphorylation upon entry into mitosis, although N-terminal phosphorylation might also regulate the protein stability via protection from proteolysis or might regulate the subcellular location. Its function is as follows. Acts as a negative regulator of entry into mitosis (G2 to M transition) by protecting the nucleus from cytoplasmically activated cyclin B1-complexed CDK1 before the onset of mitosis by mediating phosphorylation of CDK1 on 'Tyr-15'. Specifically phosphorylates and inactivates cyclin B1-complexed CDK1 reaching a maximum during G2 phase and a minimum as cells enter M phase. Phosphorylation of cyclin B1-CDK1 occurs exclusively on 'Tyr-15' and phosphorylation of monomeric CDK1 does not occur. Its activity increases during S and G2 phases and decreases at M phase when it is hyperphosphorylated. A correlated decrease in protein level occurs at M/G1 phase, probably due to its degradation. This is Wee1-like protein kinase from Homo sapiens (Human).